A 194-amino-acid chain; its full sequence is Phosphoheptose isomerase (194 aa).

An SIS domain is found at 37–194 (ISNSFKQGGK…LIEFEMAKQA (158 aa)). Position 52–54 (52–54 (NGG)) interacts with substrate. Zn(2+) is bound by residues His-61 and Glu-65. Residues Glu-65, 93-94 (ND), 119-121 (STS), Ser-124, and Gln-172 each bind substrate. The Zn(2+) site is built by Gln-172 and His-180.

It belongs to the SIS family. GmhA subfamily. In terms of assembly, homotetramer. The cofactor is Zn(2+).

The protein localises to the cytoplasm. It carries out the reaction 2 D-sedoheptulose 7-phosphate = D-glycero-alpha-D-manno-heptose 7-phosphate + D-glycero-beta-D-manno-heptose 7-phosphate. Its pathway is carbohydrate biosynthesis; D-glycero-D-manno-heptose 7-phosphate biosynthesis; D-glycero-alpha-D-manno-heptose 7-phosphate and D-glycero-beta-D-manno-heptose 7-phosphate from sedoheptulose 7-phosphate: step 1/1. It participates in bacterial outer membrane biogenesis; LOS core biosynthesis. In terms of biological role, catalyzes the isomerization of sedoheptulose 7-phosphate in D-glycero-D-manno-heptose 7-phosphate. The protein is Phosphoheptose isomerase of Haemophilus influenzae (strain ATCC 51907 / DSM 11121 / KW20 / Rd).